The chain runs to 889 residues: DNA gyrase subunit A (889 aa).

The Topo IIA-type catalytic domain occupies 35–501 (LPDVRDGLKP…GFEDLEDEDL (467 aa)). Y123 functions as the O-(5'-phospho-DNA)-tyrosine intermediate in the catalytic mechanism. The GyrA-box signature appears at 528-534 (QNRGGRG). The tract at residues 811 to 889 (KEDAEDETNE…IQQSSDEDEE (79 aa)) is disordered. Residues 813-823 (DAEDETNEDEQ) are compositionally biased toward acidic residues. The span at 863–875 (DGRIEVRQDFMDR) shows a compositional bias: basic and acidic residues. Residues 876-889 (VEEDIQQSSDEDEE) are compositionally biased toward acidic residues.

It belongs to the type II topoisomerase GyrA/ParC subunit family. In terms of assembly, heterotetramer, composed of two GyrA and two GyrB chains. In the heterotetramer, GyrA contains the active site tyrosine that forms a transient covalent intermediate with DNA, while GyrB binds cofactors and catalyzes ATP hydrolysis.

The protein resides in the cytoplasm. It catalyses the reaction ATP-dependent breakage, passage and rejoining of double-stranded DNA.. A type II topoisomerase that negatively supercoils closed circular double-stranded (ds) DNA in an ATP-dependent manner to modulate DNA topology and maintain chromosomes in an underwound state. Negative supercoiling favors strand separation, and DNA replication, transcription, recombination and repair, all of which involve strand separation. Also able to catalyze the interconversion of other topological isomers of dsDNA rings, including catenanes and knotted rings. Type II topoisomerases break and join 2 DNA strands simultaneously in an ATP-dependent manner. The protein is DNA gyrase subunit A of Staphylococcus aureus (strain Mu50 / ATCC 700699).